The sequence spans 265 residues: Ribosomal RNA small subunit methyltransferase A (265 aa).

Positions 17, 19, 44, 65, 90, and 112 each coordinate S-adenosyl-L-methionine.

This sequence belongs to the class I-like SAM-binding methyltransferase superfamily. rRNA adenine N(6)-methyltransferase family. RsmA subfamily.

The protein resides in the cytoplasm. The catalysed reaction is adenosine(1518)/adenosine(1519) in 16S rRNA + 4 S-adenosyl-L-methionine = N(6)-dimethyladenosine(1518)/N(6)-dimethyladenosine(1519) in 16S rRNA + 4 S-adenosyl-L-homocysteine + 4 H(+). Specifically dimethylates two adjacent adenosines (A1518 and A1519) in the loop of a conserved hairpin near the 3'-end of 16S rRNA in the 30S particle. May play a critical role in biogenesis of 30S subunits. This chain is Ribosomal RNA small subunit methyltransferase A, found in Xylella fastidiosa (strain 9a5c).